A 68-amino-acid polypeptide reads, in one-letter code: Putative membrane protein insertion efficiency factor (68 aa).

It belongs to the UPF0161 family.

It is found in the cell membrane. In terms of biological role, could be involved in insertion of integral membrane proteins into the membrane. The protein is Putative membrane protein insertion efficiency factor of Herpetosiphon aurantiacus (strain ATCC 23779 / DSM 785 / 114-95).